A 444-amino-acid chain; its full sequence is Squalene synthase ERG9 (444 aa).

The chain crosses the membrane as a helical span at residues 421–441; it reads FNMVLSIILSVLLGFYYIYTL.

The protein belongs to the phytoene/squalene synthase family. Requires Mg(2+) as cofactor.

It is found in the endoplasmic reticulum membrane. The protein localises to the microsome. The catalysed reaction is 2 (2E,6E)-farnesyl diphosphate + NADPH + H(+) = squalene + 2 diphosphate + NADP(+). It carries out the reaction 2 (2E,6E)-farnesyl diphosphate + NADH + H(+) = squalene + 2 diphosphate + NAD(+). It functions in the pathway terpene metabolism; lanosterol biosynthesis; lanosterol from farnesyl diphosphate: step 1/3. Its function is as follows. Squalene synthase; part of the third module of ergosterol biosynthesis pathway that includes the late steps of the pathway. ERG9 produces squalene from 2 farnesyl pyrophosphate moieties. The third module or late pathway involves the ergosterol synthesis itself through consecutive reactions that mainly occur in the endoplasmic reticulum (ER) membrane. Firstly, the squalene synthase ERG9 catalyzes the condensation of 2 farnesyl pyrophosphate moieties to form squalene, which is the precursor of all steroids. Squalene synthase is crucial for balancing the incorporation of farnesyl diphosphate (FPP) into sterol and nonsterol isoprene synthesis. Secondly, the squalene epoxidase ERG1 catalyzes the stereospecific oxidation of squalene to (S)-2,3-epoxysqualene, which is considered to be a rate-limiting enzyme in steroid biosynthesis. Then, the lanosterol synthase ERG7 catalyzes the cyclization of (S)-2,3 oxidosqualene to lanosterol, a reaction that forms the sterol core. In the next steps, lanosterol is transformed to zymosterol through a complex process involving various demethylation, reduction and desaturation reactions. The lanosterol 14-alpha-demethylase ERG11 (also known as CYP51) catalyzes C14-demethylation of lanosterol to produce 4,4'-dimethyl cholesta-8,14,24-triene-3-beta-ol, which is critical for ergosterol biosynthesis. The C-14 reductase ERG24 reduces the C14=C15 double bond of 4,4-dimethyl-cholesta-8,14,24-trienol to produce 4,4-dimethyl-cholesta-8,24-dienol. 4,4-dimethyl-cholesta-8,24-dienol is substrate of the C-4 demethylation complex ERG25-ERG26-ERG27 in which ERG25 catalyzes the three-step monooxygenation required for the demethylation of 4,4-dimethyl and 4alpha-methylsterols, ERG26 catalyzes the oxidative decarboxylation that results in a reduction of the 3-beta-hydroxy group at the C-3 carbon to an oxo group, and ERG27 is responsible for the reduction of the keto group on the C-3. ERG28 has a role as a scaffold to help anchor ERG25, ERG26 and ERG27 to the endoplasmic reticulum and ERG29 regulates the activity of the iron-containing C4-methylsterol oxidase ERG25. Then, the sterol 24-C-methyltransferase ERG6 catalyzes the methyl transfer from S-adenosyl-methionine to the C-24 of zymosterol to form fecosterol. The C-8 sterol isomerase ERG2 catalyzes the reaction which results in unsaturation at C-7 in the B ring of sterols and thus converts fecosterol to episterol. The sterol-C5-desaturase ERG3 then catalyzes the introduction of a C-5 double bond in the B ring to produce 5-dehydroepisterol. The C-22 sterol desaturase ERG5 further converts 5-dehydroepisterol into ergosta-5,7,22,24(28)-tetraen-3beta-ol by forming the C-22(23) double bond in the sterol side chain. Finally, ergosta-5,7,22,24(28)-tetraen-3beta-ol is substrate of the C-24(28) sterol reductase ERG4 to produce ergosterol. This is Squalene synthase ERG9 from Saccharomyces cerevisiae (strain ATCC 204508 / S288c) (Baker's yeast).